Consider the following 153-residue polypeptide: Aspartate carbamoyltransferase regulatory chain (153 aa).

Residues cysteine 109, cysteine 114, cysteine 138, and cysteine 141 each coordinate Zn(2+).

Belongs to the PyrI family. As to quaternary structure, contains catalytic and regulatory chains. Requires Zn(2+) as cofactor.

Its function is as follows. Involved in allosteric regulation of aspartate carbamoyltransferase. This is Aspartate carbamoyltransferase regulatory chain from Klebsiella pneumoniae subsp. pneumoniae (strain ATCC 700721 / MGH 78578).